The following is a 78-amino-acid chain: Large ribosomal subunit protein bL28 (78 aa).

Residues 1 to 20 (MSRVCQVTGKGPVTGNNISH) form a disordered region.

The protein belongs to the bacterial ribosomal protein bL28 family.

In Pseudomonas putida (strain W619), this protein is Large ribosomal subunit protein bL28.